Reading from the N-terminus, the 197-residue chain is Na(+)-translocating NADH-quinone reductase subunit E (197 aa).

Helical transmembrane passes span 11 to 31, 35 to 55, 76 to 96, 108 to 128, 139 to 159, and 175 to 195; these read SVFI…FLAV, VSTA…SVPV, FLKF…LEMF, LGIY…VSFM, VVYG…LAGI, and LGIT…FSGI.

This sequence belongs to the NqrDE/RnfAE family. Composed of six subunits; NqrA, NqrB, NqrC, NqrD, NqrE and NqrF.

The protein localises to the cell inner membrane. The catalysed reaction is a ubiquinone + n Na(+)(in) + NADH + H(+) = a ubiquinol + n Na(+)(out) + NAD(+). Its function is as follows. NQR complex catalyzes the reduction of ubiquinone-1 to ubiquinol by two successive reactions, coupled with the transport of Na(+) ions from the cytoplasm to the periplasm. NqrA to NqrE are probably involved in the second step, the conversion of ubisemiquinone to ubiquinol. This Neisseria meningitidis serogroup C (strain 053442) protein is Na(+)-translocating NADH-quinone reductase subunit E.